We begin with the raw amino-acid sequence, 428 residues long: Serine--tRNA ligase (428 aa).

231-233 (TAE) contacts L-serine. 262 to 264 (RSE) is an ATP binding site. Position 285 (glutamate 285) interacts with L-serine. 349-352 (EISS) is a binding site for ATP. Serine 385 provides a ligand contact to L-serine.

The protein belongs to the class-II aminoacyl-tRNA synthetase family. Type-1 seryl-tRNA synthetase subfamily. Homodimer. The tRNA molecule binds across the dimer.

The protein resides in the cytoplasm. The catalysed reaction is tRNA(Ser) + L-serine + ATP = L-seryl-tRNA(Ser) + AMP + diphosphate + H(+). It carries out the reaction tRNA(Sec) + L-serine + ATP = L-seryl-tRNA(Sec) + AMP + diphosphate + H(+). Its pathway is aminoacyl-tRNA biosynthesis; selenocysteinyl-tRNA(Sec) biosynthesis; L-seryl-tRNA(Sec) from L-serine and tRNA(Sec): step 1/1. In terms of biological role, catalyzes the attachment of serine to tRNA(Ser). Is also able to aminoacylate tRNA(Sec) with serine, to form the misacylated tRNA L-seryl-tRNA(Sec), which will be further converted into selenocysteinyl-tRNA(Sec). This Staphylococcus carnosus (strain TM300) protein is Serine--tRNA ligase.